A 457-amino-acid polypeptide reads, in one-letter code: Serine/threonine-protein phosphatase 2A activator 2 (457 aa).

2 disordered regions span residues 387–407 and 426–457; these read DAHG…GEGQ and AEQE…IPFD. A compositionally biased stretch (basic residues) spans 391-400; sequence HIHPAGKPHA.

This sequence belongs to the PTPA-type PPIase family.

The protein resides in the cytoplasm. It catalyses the reaction [protein]-peptidylproline (omega=180) = [protein]-peptidylproline (omega=0). Its function is as follows. PPIases accelerate the folding of proteins. It catalyzes the cis-trans isomerization of proline imidic peptide bonds in oligopeptides. Acts as a regulatory subunit for PP2A-like phosphatases modulating their activity or substrate specificity, probably by inducing a conformational change in the catalytic subunit, a direct target of the PPIase. Can reactivate inactive phosphatase PP2A-phosphatase methylesterase complexes (PP2Ai) in presence of ATP and Mg(2+) by dissociating the inactive form from the complex. The chain is Serine/threonine-protein phosphatase 2A activator 2 (RRD2) from Mycosarcoma maydis (Corn smut fungus).